Reading from the N-terminus, the 445-residue chain is Glycine--tRNA ligase (445 aa).

The substrate site is built by Arg-97 and Glu-145. ATP is bound by residues 177–179 (RNE), 187–192 (FRTCEF), 262–263 (EI), and 308–311 (GLTR). 192–196 (FEQME) is a binding site for substrate. 304–308 (ETSAG) contacts substrate.

It belongs to the class-II aminoacyl-tRNA synthetase family. In terms of assembly, homodimer.

The protein resides in the cytoplasm. The catalysed reaction is tRNA(Gly) + glycine + ATP = glycyl-tRNA(Gly) + AMP + diphosphate. Catalyzes the attachment of glycine to tRNA(Gly). The sequence is that of Glycine--tRNA ligase from Borreliella afzelii (strain PKo) (Borrelia afzelii).